We begin with the raw amino-acid sequence, 182 residues long: Proline-rich protein, Y-linked (182 aa).

2 disordered regions span residues 1 to 22 (MMRR…KPRD) and 89 to 108 (VPAD…PPPG). Positions 91–108 (ADPPPASPYRTSPRPPPG) are enriched in pro residues. A DUF1725 domain is found at 154-167 (WMKLETIILSKLSQ).

The chain is Proline-rich protein, Y-linked (PRORY) from Homo sapiens (Human).